Here is a 291-residue protein sequence, read N- to C-terminus: 3-hydroxy-5-phosphonooxypentane-2,4-dione thiolase (291 aa).

Lysine 203 (schiff-base intermediate with substrate) is an active-site residue.

It belongs to the DeoC/FbaB aldolase family. Homodecamer.

The protein localises to the cytoplasm. The enzyme catalyses dihydroxyacetone phosphate + acetyl-CoA = 3-hydroxy-2,4-dioxopentyl phosphate + CoA. Its function is as follows. Involved in the degradation of phospho-AI-2, thereby terminating induction of the lsr operon and closing the AI-2 signaling cycle. Catalyzes the transfer of an acetyl moiety from 3-hydroxy-5-phosphonooxypentane-2,4-dione to CoA to form glycerone phosphate and acetyl-CoA. The chain is 3-hydroxy-5-phosphonooxypentane-2,4-dione thiolase from Escherichia coli (strain K12 / DH10B).